Reading from the N-terminus, the 238-residue chain is uncharacterized protein (238 aa).

This is an uncharacterized protein from Ictaluridae (bullhead catfishes).